Reading from the N-terminus, the 370-residue chain is Doublesex- and mab-3-related transcription factor C2 (370 aa).

A disordered region spans residues 1–38 (MDPSETAALHHCSADSSPADEARVPQSTELIPRRPVSR). The segment at residues 42–89 (CARCRNHGVTAHLKGHKRLCLFQACECHKCVLILERRRVMAAQVALRR) is a DNA-binding region (DM). Residues 334-356 (APPGGRGFQPVGPPLRPSPGSSV) form a disordered region.

Belongs to the DMRT family. In terms of tissue distribution, expressed in testis. Highly expressed in ovary.

The protein resides in the nucleus. Its function is as follows. May be involved in sexual development. In Mus musculus (Mouse), this protein is Doublesex- and mab-3-related transcription factor C2 (Dmrtc2).